We begin with the raw amino-acid sequence, 171 residues long: UPF0398 protein spyM18_1659 (171 aa).

Belongs to the UPF0398 family.

The protein is UPF0398 protein spyM18_1659 of Streptococcus pyogenes serotype M18 (strain MGAS8232).